We begin with the raw amino-acid sequence, 92 residues long: Small ribosomal subunit protein uS19 (92 aa).

The protein belongs to the universal ribosomal protein uS19 family.

Its function is as follows. Protein S19 forms a complex with S13 that binds strongly to the 16S ribosomal RNA. This is Small ribosomal subunit protein uS19 from Cereibacter sphaeroides (strain ATCC 17029 / ATH 2.4.9) (Rhodobacter sphaeroides).